The chain runs to 98 residues: Co-chaperonin GroES (98 aa).

The segment at Glu35–Val57 is disordered.

It belongs to the GroES chaperonin family. Heptamer of 7 subunits arranged in a ring. Interacts with the chaperonin GroEL.

The protein resides in the cytoplasm. In terms of biological role, together with the chaperonin GroEL, plays an essential role in assisting protein folding. The GroEL-GroES system forms a nano-cage that allows encapsulation of the non-native substrate proteins and provides a physical environment optimized to promote and accelerate protein folding. GroES binds to the apical surface of the GroEL ring, thereby capping the opening of the GroEL channel. The chain is Co-chaperonin GroES from Cutibacterium acnes (strain DSM 16379 / KPA171202) (Propionibacterium acnes).